We begin with the raw amino-acid sequence, 673 residues long: DNA ligase (673 aa).

NAD(+) contacts are provided by residues 34 to 38 (DAEYD), 83 to 84 (SL), and Glu116. Lys118 (N6-AMP-lysine intermediate) is an active-site residue. Residues Arg139, Glu176, Lys293, and Lys317 each contribute to the NAD(+) site. Residues Cys411, Cys414, Cys429, and Cys435 each contribute to the Zn(2+) site. The 79-residue stretch at 595–673 (NQQNPFFGKT…EDEFLKWVNS (79 aa)) folds into the BRCT domain.

Belongs to the NAD-dependent DNA ligase family. LigA subfamily. Requires Mg(2+) as cofactor. The cofactor is Mn(2+).

The enzyme catalyses NAD(+) + (deoxyribonucleotide)n-3'-hydroxyl + 5'-phospho-(deoxyribonucleotide)m = (deoxyribonucleotide)n+m + AMP + beta-nicotinamide D-nucleotide.. DNA ligase that catalyzes the formation of phosphodiester linkages between 5'-phosphoryl and 3'-hydroxyl groups in double-stranded DNA using NAD as a coenzyme and as the energy source for the reaction. It is essential for DNA replication and repair of damaged DNA. This chain is DNA ligase, found in Legionella pneumophila (strain Corby).